Reading from the N-terminus, the 240-residue chain is Ribonuclease T2 (240 aa).

The first 19 residues, 1-19, serve as a signal peptide directing secretion; it reads MRFIAFAVIFSAVYLCSSA. An intrachain disulfide couples Cys-41 to Cys-46. The active site involves His-56. Disulfide bonds link Cys-66-Cys-110, Cys-173-Cys-227, and Cys-191-Cys-201. 2 N-linked (GlcNAc...) asparagine glycosylation sites follow: Asn-67 and Asn-73. Active-site residues include Glu-103 and His-107.

This sequence belongs to the RNase T2 family. In terms of tissue distribution, ubiquitous.

The protein localises to the lysosome lumen. It localises to the endoplasmic reticulum lumen. It is found in the secreted. The enzyme catalyses a ribonucleotidyl-ribonucleotide-RNA + H2O = a 3'-end 3'-phospho-ribonucleotide-RNA + a 5'-end dephospho-ribonucleoside-RNA + H(+). Its function is as follows. Has ribonuclease activity, with higher activity at acidic pH. Probably is involved in lysosomal degradation of ribosomal RNA. In Danio rerio (Zebrafish), this protein is Ribonuclease T2 (rnaset2).